The sequence spans 170 residues: Lipoprotein signal peptidase (170 aa).

3 helical membrane passes run 12–32 (WYWV…WVLS), 67–87 (WQRW…SVWL), and 94–116 (MWRL…IDRL). Active-site residues include D123 and D141. A helical membrane pass occupies residues 133–153 (HFPAFNIADSAICVGAALIIL).

It belongs to the peptidase A8 family.

It is found in the cell inner membrane. The enzyme catalyses Release of signal peptides from bacterial membrane prolipoproteins. Hydrolyzes -Xaa-Yaa-Zaa-|-(S,diacylglyceryl)Cys-, in which Xaa is hydrophobic (preferably Leu), and Yaa (Ala or Ser) and Zaa (Gly or Ala) have small, neutral side chains.. Its pathway is protein modification; lipoprotein biosynthesis (signal peptide cleavage). Its function is as follows. This protein specifically catalyzes the removal of signal peptides from prolipoproteins. In Shewanella halifaxensis (strain HAW-EB4), this protein is Lipoprotein signal peptidase.